Here is a 482-residue protein sequence, read N- to C-terminus: Protein trichome birefringence-like 15 (482 aa).

Residues 109–129 (GSVSLSLIILILLVTTLLVSA) form a helical; Signal-anchor for type II membrane protein membrane-spanning segment. A GDS motif motif is present at residues 217-219 (GDS). The short motif at 461–475 (DCLHWCLPGIPDTWN) is the DCXHWCLPGXXDXWN motif element.

It belongs to the PC-esterase family. TBL subfamily.

The protein resides in the membrane. Its function is as follows. May act as a bridging protein that binds pectin and other cell wall polysaccharides. Probably involved in maintaining esterification of pectins. May be involved in the specific O-acetylation of cell wall polymers. The protein is Protein trichome birefringence-like 15 (TBL15) of Arabidopsis thaliana (Mouse-ear cress).